A 278-amino-acid chain; its full sequence is Orotidine 5'-phosphate decarboxylase (278 aa).

The active-site Proton donor is Lys96.

It belongs to the OMP decarboxylase family. Type 2 subfamily.

The enzyme catalyses orotidine 5'-phosphate + H(+) = UMP + CO2. Its pathway is pyrimidine metabolism; UMP biosynthesis via de novo pathway; UMP from orotate: step 2/2. The protein is Orotidine 5'-phosphate decarboxylase (pyrF) of Streptomyces coelicolor (strain ATCC BAA-471 / A3(2) / M145).